The following is a 138-amino-acid chain: Ribosome-binding factor A (138 aa).

The disordered stretch occupies residues 112 to 138 (EARTQGQAPAADVEPAPGAAPDDEAEE). A compositionally biased stretch (low complexity) spans 119–131 (APAADVEPAPGAA).

The protein belongs to the RbfA family. Monomer. Binds 30S ribosomal subunits, but not 50S ribosomal subunits or 70S ribosomes.

The protein localises to the cytoplasm. Functionally, one of several proteins that assist in the late maturation steps of the functional core of the 30S ribosomal subunit. Associates with free 30S ribosomal subunits (but not with 30S subunits that are part of 70S ribosomes or polysomes). Required for efficient processing of 16S rRNA. May interact with the 5'-terminal helix region of 16S rRNA. In Anaeromyxobacter sp. (strain K), this protein is Ribosome-binding factor A.